The following is a 406-amino-acid chain: Formate-dependent phosphoribosylglycinamide formyltransferase (406 aa).

Residues 27 to 28 and glutamate 87 contribute to the N(1)-(5-phospho-beta-D-ribosyl)glycinamide site; that span reads EL. ATP contacts are provided by residues arginine 120, lysine 162, 167-172, 202-205, and glutamate 210; these read SSGKGQ and EGFI. An ATP-grasp domain is found at 125-320; sequence RLAAETLGLP…EFELHARALL (196 aa). Residues glutamate 279 and glutamate 291 each contribute to the Mg(2+) site. N(1)-(5-phospho-beta-D-ribosyl)glycinamide-binding positions include aspartate 298, lysine 367, and 374 to 375; that span reads RR.

Belongs to the PurK/PurT family. Homodimer.

It catalyses the reaction N(1)-(5-phospho-beta-D-ribosyl)glycinamide + formate + ATP = N(2)-formyl-N(1)-(5-phospho-beta-D-ribosyl)glycinamide + ADP + phosphate + H(+). It participates in purine metabolism; IMP biosynthesis via de novo pathway; N(2)-formyl-N(1)-(5-phospho-D-ribosyl)glycinamide from N(1)-(5-phospho-D-ribosyl)glycinamide (formate route): step 1/1. In terms of biological role, involved in the de novo purine biosynthesis. Catalyzes the transfer of formate to 5-phospho-ribosyl-glycinamide (GAR), producing 5-phospho-ribosyl-N-formylglycinamide (FGAR). Formate is provided by PurU via hydrolysis of 10-formyl-tetrahydrofolate. This is Formate-dependent phosphoribosylglycinamide formyltransferase from Bordetella bronchiseptica (strain ATCC BAA-588 / NCTC 13252 / RB50) (Alcaligenes bronchisepticus).